Reading from the N-terminus, the 127-residue chain is uncharacterized protein (127 aa).

This is an uncharacterized protein from Methanocaldococcus jannaschii (strain ATCC 43067 / DSM 2661 / JAL-1 / JCM 10045 / NBRC 100440) (Methanococcus jannaschii).